Consider the following 821-residue polypeptide: Glycogen phosphorylase (821 aa).

Lys-667 carries the post-translational modification N6-(pyridoxal phosphate)lysine.

This sequence belongs to the glycogen phosphorylase family. Requires pyridoxal 5'-phosphate as cofactor.

The enzyme catalyses [(1-&gt;4)-alpha-D-glucosyl](n) + phosphate = [(1-&gt;4)-alpha-D-glucosyl](n-1) + alpha-D-glucose 1-phosphate. Functionally, phosphorylase is an important allosteric enzyme in carbohydrate metabolism. Enzymes from different sources differ in their regulatory mechanisms and in their natural substrates. However, all known phosphorylases share catalytic and structural properties. The sequence is that of Glycogen phosphorylase (glgP) from Haemophilus influenzae (strain ATCC 51907 / DSM 11121 / KW20 / Rd).